We begin with the raw amino-acid sequence, 396 residues long: KiSS-1 receptor (396 aa).

Residues 1 to 43 (MATEATLAPNVTWWAPSNASGCPGCGVNASDDPGSAPRPLDAW) lie on the Extracellular side of the membrane. Residues asparagine 10, asparagine 18, and asparagine 28 are each glycosylated (N-linked (GlcNAc...) asparagine). Residues 44–66 (LVPLFFATLMLLGLVGNSLVIYV) form a helical membrane-spanning segment. Residues 67–78 (ICRHKHMQTVTN) lie on the Cytoplasmic side of the membrane. Residues 79-101 (FYIANLAATDVTFLLCCVPFTAL) form a helical membrane-spanning segment. Topologically, residues 102 to 116 (LYPLPAWVLGDFMCK) are extracellular. The cysteines at positions 115 and 191 are disulfide-linked. The chain crosses the membrane as a helical span at residues 117–138 (FVNYIQQVSVQATCATLTAMSV). The Cytoplasmic portion of the chain corresponds to 139–157 (DRWYVTVFPLRALHRRTPR). The chain crosses the membrane as a helical span at residues 158 to 180 (LALAVSLSIWVGSAAVSAPVLAL). Topologically, residues 181–203 (HRLSPGPRTYCSEAFPSRALERA) are extracellular. Residues 204–224 (FALYNLLALYLLPLLATCACY) form a helical membrane-spanning segment. Over 225–260 (GAMLRHLGRAAVRPAPTDGALQGQLLAQRAGAVRTK) the chain is Cytoplasmic. Residues 261–283 (VSRLVAAVVLLFAACWGPIQLFL) form a helical membrane-spanning segment. The Extracellular segment spans residues 284–305 (VLQALGPSGAWHPRSYAAYAVK). Residues 306–330 (IWAHCMSYSNSALNPLLYAFLGSHF) traverse the membrane as a helical segment. Residues 331 to 396 (RQAFCRVCPC…CAQSERTASL (66 aa)) are Cytoplasmic-facing. The segment at 349 to 396 (HTSAHSDRAATHTVPHSRAAHPVRIRSPEPGNPVVRSPCAQSERTASL) is disordered. Positions 387-396 (CAQSERTASL) are enriched in polar residues.

This sequence belongs to the G-protein coupled receptor 1 family. Highest level in the heart and 15- and 17-day embryos. Low level in other tissues. Colocalized with gonadotropin-releasing hormone (GnRH) neurons in the hypothalamus.

The protein localises to the cell membrane. Its function is as follows. Receptor for metastin (kisspeptin-52 or kp-52), a C-terminally amidated peptide of KiSS1. KiSS1 is a metastasis suppressor protein. Activation of the receptor inhibits cell proliferation and cell migration, key characteristics of tumor metastasis. The receptor is essential for normal gonadotropin-released hormone physiology and for puberty. The hypothalamic KiSS1/KISS1R system is a pivotal factor in central regulation of the gonadotropic axis at puberty and in adulthood. Analysis of the transduction pathways activated by the receptor identifies coupling to phospholipase C and intracellular calcium release through pertussis toxin-insensitive G(q) proteins. This Mus musculus (Mouse) protein is KiSS-1 receptor (Kiss1r).